The chain runs to 74 residues: Conotoxin AbVIH (74 aa).

A signal peptide spans 1 to 17 (VLIIAVLFLTACQLTTA). A propeptide spanning residues 18-40 (ETSSRGKQKHRALRSTDKDSRMT) is cleaved from the precursor. The interval 19 to 40 (TSSRGKQKHRALRSTDKDSRMT) is disordered. 3 disulfide bridges follow: cysteine 43/cysteine 57, cysteine 50/cysteine 61, and cysteine 56/cysteine 68.

Belongs to the conotoxin O1 superfamily. In terms of tissue distribution, expressed by the venom duct.

Its subcellular location is the secreted. This chain is Conotoxin AbVIH, found in Conus abbreviatus (Abbreviated cone).